The following is a 262-amino-acid chain: 3-methyl-2-oxobutanoate hydroxymethyltransferase (262 aa).

Residues aspartate 43 and aspartate 82 each coordinate Mg(2+). 3-methyl-2-oxobutanoate contacts are provided by residues 43 to 44, aspartate 82, and lysine 111; that span reads DS. Glutamate 113 is a binding site for Mg(2+). Glutamate 180 (proton acceptor) is an active-site residue.

This sequence belongs to the PanB family. Homodecamer; pentamer of dimers. Mg(2+) serves as cofactor.

Its subcellular location is the cytoplasm. The catalysed reaction is 3-methyl-2-oxobutanoate + (6R)-5,10-methylene-5,6,7,8-tetrahydrofolate + H2O = 2-dehydropantoate + (6S)-5,6,7,8-tetrahydrofolate. It participates in cofactor biosynthesis; coenzyme A biosynthesis. Catalyzes the reversible reaction in which hydroxymethyl group from 5,10-methylenetetrahydrofolate is transferred onto alpha-ketoisovalerate to form ketopantoate. This Pyrobaculum aerophilum (strain ATCC 51768 / DSM 7523 / JCM 9630 / CIP 104966 / NBRC 100827 / IM2) protein is 3-methyl-2-oxobutanoate hydroxymethyltransferase.